Consider the following 113-residue polypeptide: Iron-sulfur cluster insertion protein ErpA (113 aa).

Iron-sulfur cluster-binding residues include Cys41, Cys105, and Cys107.

It belongs to the HesB/IscA family. In terms of assembly, homodimer. The cofactor is iron-sulfur cluster.

Required for insertion of 4Fe-4S clusters for at least IspG. In Hydrogenovibrio crunogenus (strain DSM 25203 / XCL-2) (Thiomicrospira crunogena), this protein is Iron-sulfur cluster insertion protein ErpA.